We begin with the raw amino-acid sequence, 433 residues long: Urokinase-type plasminogen activator (433 aa).

The N-terminal stretch at 1 to 20 (MKVWLASLFLCALVVKNSEG) is a signal peptide. The region spanning 28-64 (DESNCGCQNGGVCVSYKYFSRIRRCSCPRKFQGEHCE) is the EGF-like domain. 6 disulfides stabilise this stretch: cysteine 32–cysteine 40, cysteine 34–cysteine 52, cysteine 54–cysteine 63, cysteine 71–cysteine 152, cysteine 92–cysteine 134, and cysteine 123–cysteine 147. The segment at 35 to 58 (QNGGVCVSYKYFSRIRRCSCPRKF) is binds urokinase plasminogen activator surface receptor. Positions 71–152 (CYHGNGDSYR…FVQECMVHDC (82 aa)) constitute a Kringle domain. A connecting peptide region spans residues 153 to 179 (SLSKKPSSSVDQQGFQCGQKALRPRFK). Serine 159 is subject to Phosphoserine. 6 cysteine pairs are disulfide-bonded: cysteine 169/cysteine 301, cysteine 211/cysteine 227, cysteine 219/cysteine 290, cysteine 315/cysteine 384, cysteine 347/cysteine 363, and cysteine 374/cysteine 402. Positions 180–426 (IVGGEFTEVE…FLDWIQSHIG (247 aa)) constitute a Peptidase S1 domain. Catalysis depends on charge relay system residues histidine 226 and aspartate 277. The active-site Charge relay system is the serine 378.

Belongs to the peptidase S1 family. As to quaternary structure, found in high and low molecular mass forms. Each consists of two chains, A and B. The high molecular mass form contains a long chain A which is cleaved to yield a short chain A. Forms heterodimer with SERPINA5. Binds LRP1B; binding is followed by internalization and degradation. Interacts with MRC2. Interacts with PLAUR. In complex with SERPINE1, interacts with PLAUR/uPAR. Interacts with SORL1 and LRP1, either alone or in complex with SERPINE1; these interactions are abolished in the presence of LRPAP1/RAP. The ternary complex composed of PLAUR-PLAU-PAI1 also interacts with SORLA. In terms of processing, produced as an inactive single-chain protein (pro-uPA or sc-uPA), is processed into the active disulfide-linked two-chain form of PLAU/uPA by a proteolytic event mediated, at least, by TMPRSS4.

The protein resides in the secreted. The enzyme catalyses Specific cleavage of Arg-|-Val bond in plasminogen to form plasmin.. With respect to regulation, inhibited by SERPINA5. Inhibited by SERPINE1. Its function is as follows. Specifically cleaves the zymogen plasminogen to form the active enzyme plasmin. This Mus musculus (Mouse) protein is Urokinase-type plasminogen activator (Plau).